Here is a 286-residue protein sequence, read N- to C-terminus: Ferric acinetobactin reductase (286 aa).

In terms of domain architecture, FAD-binding FR-type spans 25 to 131 (MEQLEMTIVS…IGPRPHFIPN (107 aa)). Residues Arg79, Val80, Thr82, Asp96, Val98, His100, Asp102, Ser104, Ala106, Arg250, Gly252, and Ser255 each contribute to the FAD site.

The protein belongs to the SIP oxidoreductase family. As to quaternary structure, monomer in solution. FAD serves as cofactor.

It carries out the reaction 2 a Fe(II)-siderophore + NAD(+) + H(+) = 2 a Fe(III)-siderophore + NADH. The catalysed reaction is 2 a Fe(II)-siderophore + NADP(+) + H(+) = 2 a Fe(III)-siderophore + NADPH. Its function is as follows. Ferric-siderophore reductase involved in iron removal from the siderophores after their transport into the cell. Interacts with the siderophores acinetobactin (Acb) and preacinetobactin (pre-Acb) and catalyzes the reduction of the ferric iron bound to the siderophores to ferrous iron, resulting in destabilization of the siderophore chelation complex and entrance of ferrous iron into the intracellular pool of bioavailable metals. Can use NADH and NADPH as electron donors in vitro, but the reduction rate is very slow, suggesting that NADH and NADPH are not the physiological partners of BauF. The sequence is that of Ferric acinetobactin reductase from Acinetobacter baumannii.